We begin with the raw amino-acid sequence, 841 residues long: Toll-like receptor 4 (841 aa).

An N-terminal signal peptide occupies residues 1-23 (MMARVRLAAALIPATAILSCLRT). The Extracellular portion of the chain corresponds to 24-632 (ESWDPCVQVV…FRNATCQMSK (609 aa)). Cysteine 29 and cysteine 40 are joined by a disulfide. N-linked (GlcNAc...) asparagine glycosylation is found at asparagine 35 and asparagine 73. 7 LRR repeats span residues 55–76 (STKM…NFSS), 79–100 (ELQV…TFQG), 103–124 (HLST…AFSG), 127–148 (SLQK…PIGH), 151–172 (TLKE…EYFS), 176–197 (NLEH…DVKV), and 205–225 (NLSL…TFKE). Residues asparagine 205, asparagine 238, asparagine 282, and asparagine 309 are each glycosylated (N-linked (GlcNAc...) asparagine). A disulfide bond links cysteine 281 and cysteine 306. LRR repeat units follow at residues 352–373 (SLKK…FQLP), 374–395 (SLQY…SHAD), 400–422 (NLKH…MGLE), 423–444 (KLEH…SVFL), 448–469 (NLRY…IFTG), 472–495 (SLKT…FTEL), 497–518 (NLTV…AFHS), 521–542 (SLQV…LYEP), and 545–568 (LLRI…QNLP). An intrachain disulfide couples cysteine 390 to cysteine 391. 2 N-linked (GlcNAc...) asparagine glycosylation sites follow: asparagine 497 and asparagine 526. 2 N-linked (GlcNAc...) asparagine glycosylation sites follow: asparagine 570 and asparagine 575. Positions 579–630 (NAFACVCEHQRFLQWVKDQRQLLVGAEQMMCAEPLDMKDMPVLSFRNATCQM) constitute an LRRCT domain. 2 cysteine pairs are disulfide-bonded: cysteine 583/cysteine 609 and cysteine 585/cysteine 628. An N-linked (GlcNAc...) asparagine glycan is attached at asparagine 625. A helical transmembrane segment spans residues 633–653 (MIISVSVVTVLLVSVVGVLVY). The Cytoplasmic segment spans residues 654-841 (KFYFHLMLLA…TNPQEATTST (188 aa)). Residues 673-816 (STYGAFVIYS…VFWRRLRKAL (144 aa)) enclose the TIR domain. The tract at residues 820-841 (KPQSPEGTADAETNPQEATTST) is disordered. Positions 830–841 (AETNPQEATTST) are enriched in polar residues.

This sequence belongs to the Toll-like receptor family. Belongs to the lipopolysaccharide (LPS) receptor, a multi-protein complex containing at least CD14, LY96 and TLR4. Binding to bacterial LPS leads to homodimerization. Interacts with LY96 via the extracellular domain. Interacts with MYD88 and TIRAP via their respective TIR domains. Interacts with TICAM2. Interacts with NOX4. Interacts with CNPY3 and HSP90B1; this interaction is required for proper folding in the endoplasmic reticulum. Interacts with MAP3K21; this interaction leads to negative regulation of TLR4 signaling. Interacts with CD36, following CD36 stimulation by oxLDL or amyloid-beta 42, and forms a heterodimer with TLR6. The trimeric complex is internalized and triggers inflammatory response. LYN kinase activity facilitates TLR4-TLR6 heterodimerization and signal initiation. Interacts with TICAM1 in response to LPS in a WDFY1-dependent manner. Interacts with WDFY1 in response to LPS. Interacts with SMPDL3B. Interacts with CEACAM1; upon lipopolysaccharide stimulation, forms a complex including TLR4 and the phosphorylated form of SYK and CEACAM1, which in turn, recruits PTPN6 that dephosphorylates SYK, reducing the production of reactive oxygen species (ROS) and lysosome disruption, which in turn, reduces the activity of the inflammasome. Interacts with RFTN1; the interaction occurs in response to lipopolysaccharide stimulation. Interacts with SCIMP; the interaction occurs in response to lipopolysaccharide stimulation and is enhanced by phosphorylation of SCIMP by LYN. This interaction facilitates the phosphorylation of TLR4 by LYN which elicits a selective cytokine response in macrophages. Interacts with TRAF3IP3. Interacts with TREM1; this interaction enhances TLR4-mediated inflammatory response. Interacts with ZG16B/PAUF. Interacts with CD82; this interaction inhibits TLR4-mediated signaling pathway. Post-translationally, phosphorylated on tyrosine residues by LYN after binding lipopolysaccharide. In terms of processing, ubiquitinated by RNF128 via 'Lys-28'-linked polyubiquitin chains, leading to proteasomal degradation.

The protein resides in the cell membrane. Its subcellular location is the early endosome. It is found in the cell projection. It localises to the ruffle. Transmembrane receptor that functions as a pattern recognition receptor recognizing pathogen- and damage-associated molecular patterns (PAMPs and DAMPs) to induce innate immune responses via downstream signaling pathways. At the plasma membrane, cooperates with LY96 to mediate the innate immune response to bacterial lipopolysaccharide (LPS). Also involved in LPS-independent inflammatory responses triggered by free fatty acids, such as palmitate, and Ni(2+). Mechanistically, acts via MYD88, TIRAP and TRAF6, leading to NF-kappa-B activation, cytokine secretion and the inflammatory response. Alternatively, CD14-mediated TLR4 internalization via endocytosis is associated with the initiation of a MYD88-independent signaling via the TICAM1-TBK1-IRF3 axis leading to type I interferon production. In addition to the secretion of proinflammatory cytokines, initiates the activation of NLRP3 inflammasome and formation of a positive feedback loop between autophagy and NF-kappa-B signaling cascade. In complex with TLR6, promotes inflammation in monocytes/macrophages by associating with TLR6 and the receptor CD86. Upon ligand binding, such as oxLDL or amyloid-beta 42, the TLR4:TLR6 complex is internalized and triggers inflammatory response, leading to NF-kappa-B-dependent production of CXCL1, CXCL2 and CCL9 cytokines, via MYD88 signaling pathway, and CCL5 cytokine, via TICAM1 signaling pathway. In myeloid dendritic cells, vesicular stomatitis virus glycoprotein G but not LPS promotes the activation of IRF7, leading to type I IFN production in a CD14-dependent manner. This chain is Toll-like receptor 4 (TLR4), found in Boselaphus tragocamelus (Nilgai).